A 215-amino-acid chain; its full sequence is Floral homeotic protein GLOBOSA (215 aa).

An MADS-box domain is found at 3–57; the sequence is RGKIEIKRIENSSNRQVTYSKRRNGIMKKAKEISVLCDAHVSVIIFASSGKMHEF. The K-box domain maps to 84–170; that stretch reads HEHLDNEINR…QFKLRQMHLD (87 aa).

It localises to the nucleus. Its function is as follows. Transcription factor involved in the genetic control of flower development. Acts in conjunction with DEFICIENS (defA). The protein is Floral homeotic protein GLOBOSA (GLO) of Antirrhinum majus (Garden snapdragon).